The primary structure comprises 221 residues: uncharacterized protein (221 aa).

Residues 1 to 30 (MAKFNNNILLIILIIVILFIIFYFLNKNNQ) form the signal peptide.

It localises to the virion. This is an uncharacterized protein from Acanthamoeba polyphaga mimivirus (APMV).